The primary structure comprises 205 residues: GTP cyclohydrolase-2 (205 aa).

Residue 49–53 (RVHSE) participates in GTP binding. Positions 54, 65, and 67 each coordinate Zn(2+). GTP-binding positions include Gln70, 92 to 94 (EGR), and Thr114. Asp126 acts as the Proton acceptor in catalysis. The active-site Nucleophile is Arg128. Thr149 and Lys154 together coordinate GTP.

It belongs to the GTP cyclohydrolase II family. It depends on Zn(2+) as a cofactor.

It catalyses the reaction GTP + 4 H2O = 2,5-diamino-6-hydroxy-4-(5-phosphoribosylamino)-pyrimidine + formate + 2 phosphate + 3 H(+). Its pathway is cofactor biosynthesis; riboflavin biosynthesis; 5-amino-6-(D-ribitylamino)uracil from GTP: step 1/4. In terms of biological role, catalyzes the conversion of GTP to 2,5-diamino-6-ribosylamino-4(3H)-pyrimidinone 5'-phosphate (DARP), formate and pyrophosphate. The protein is GTP cyclohydrolase-2 of Pseudomonas fluorescens (strain SBW25).